Reading from the N-terminus, the 120-residue chain is Ig heavy chain V region AC38 15.3 (120 aa).

A v segment region spans residues 1–98 (QVQLLQPGTE…EDSAVYYCAR (98 aa)). The cysteines at positions 22 and 96 are disulfide-linked. The segment at 99–105 (WDYEGDR) is d segment. Positions 106-120 (YFDVWGTGTTVTVSS) are j segment.

This chain is Ig heavy chain V region AC38 15.3, found in Mus musculus (Mouse).